Reading from the N-terminus, the 233-residue chain is uncharacterized protein (233 aa).

Disordered stretches follow at residues M1–L159 and M181–M206. Basic and acidic residues predominate over residues R36 to A115. Over residues S135–S148 the composition is skewed to low complexity. The segment covering P189–M206 has biased composition (basic and acidic residues).

This is an uncharacterized protein from Caenorhabditis elegans.